A 131-amino-acid chain; its full sequence is Small ribosomal subunit protein uS8 (131 aa).

It belongs to the universal ribosomal protein uS8 family. Part of the 30S ribosomal subunit. Contacts proteins S5 and S12.

Functionally, one of the primary rRNA binding proteins, it binds directly to 16S rRNA central domain where it helps coordinate assembly of the platform of the 30S subunit. This chain is Small ribosomal subunit protein uS8, found in Sorangium cellulosum (strain So ce56) (Polyangium cellulosum (strain So ce56)).